A 305-amino-acid polypeptide reads, in one-letter code: Aspartate carbamoyltransferase catalytic subunit (305 aa).

Carbamoyl phosphate-binding residues include arginine 54 and threonine 55. Residue lysine 83 coordinates L-aspartate. Carbamoyl phosphate contacts are provided by arginine 104, histidine 132, and glutamine 135. Positions 165 and 226 each coordinate L-aspartate. Positions 265 and 266 each coordinate carbamoyl phosphate.

It belongs to the aspartate/ornithine carbamoyltransferase superfamily. ATCase family. Heterooligomer of catalytic and regulatory chains.

The catalysed reaction is carbamoyl phosphate + L-aspartate = N-carbamoyl-L-aspartate + phosphate + H(+). Its pathway is pyrimidine metabolism; UMP biosynthesis via de novo pathway; (S)-dihydroorotate from bicarbonate: step 2/3. In terms of biological role, catalyzes the condensation of carbamoyl phosphate and aspartate to form carbamoyl aspartate and inorganic phosphate, the committed step in the de novo pyrimidine nucleotide biosynthesis pathway. This Pyrobaculum calidifontis (strain DSM 21063 / JCM 11548 / VA1) protein is Aspartate carbamoyltransferase catalytic subunit.